Here is a 582-residue protein sequence, read N- to C-terminus: Transcription factor PCF5 (582 aa).

Disordered regions lie at residues 30–78 (AAGK…QHDH) and 123–195 (SPMG…GGGG). Residues 51-64 (GGDGGGVGGGGSGG) are compositionally biased toward gly residues. In terms of domain architecture, TCP spans 213-271 (RKDRHSKVCTARGPRDRRVRLSAHTAIQFYDVQDRLGYDRPSKAVDWLIKNAKDAIDKL). Disordered regions lie at residues 283-306 (GAGAGNAAAPPSSSTHPDSAENSD), 402-423 (MFHHQQHRHGGGGGGGNGTTQQ), and 548-582 (RLPARIQGDEEHNGGGGGNGDKPPPPSSVSSASHH).

As to quaternary structure, forms homodimers and heterodimers with PCF2.

Its subcellular location is the nucleus. Transcription activator. Binds the promoter core sequence 5'-GGNCC-3'. This chain is Transcription factor PCF5 (PCF5), found in Oryza sativa subsp. indica (Rice).